Consider the following 305-residue polypeptide: Protoheme IX farnesyltransferase (305 aa).

The next 9 helical transmembrane spans lie at 31-51 (IQVL…KGHV), 53-73 (PLLL…ANAF), 98-118 (ILPW…FAVL), 124-144 (LFAA…YTLW), 153-173 (IVIG…AVTG), 181-201 (VLFG…AMMI), 221-241 (ATAR…LVLY), 242-262 (PLGT…LWLI), and 285-305 (SIFY…FLFA).

Belongs to the UbiA prenyltransferase family. Protoheme IX farnesyltransferase subfamily.

It is found in the cell inner membrane. The catalysed reaction is heme b + (2E,6E)-farnesyl diphosphate + H2O = Fe(II)-heme o + diphosphate. It functions in the pathway porphyrin-containing compound metabolism; heme O biosynthesis; heme O from protoheme: step 1/1. Functionally, converts heme B (protoheme IX) to heme O by substitution of the vinyl group on carbon 2 of heme B porphyrin ring with a hydroxyethyl farnesyl side group. In Gloeobacter violaceus (strain ATCC 29082 / PCC 7421), this protein is Protoheme IX farnesyltransferase.